Here is a 559-residue protein sequence, read N- to C-terminus: Formate--tetrahydrofolate ligase (559 aa).

Residue 68–75 (TPAGEGKS) participates in ATP binding.

The protein belongs to the formate--tetrahydrofolate ligase family.

It catalyses the reaction (6S)-5,6,7,8-tetrahydrofolate + formate + ATP = (6R)-10-formyltetrahydrofolate + ADP + phosphate. It functions in the pathway one-carbon metabolism; tetrahydrofolate interconversion. This chain is Formate--tetrahydrofolate ligase, found in Lactobacillus gasseri (strain ATCC 33323 / DSM 20243 / BCRC 14619 / CIP 102991 / JCM 1131 / KCTC 3163 / NCIMB 11718 / NCTC 13722 / AM63).